Here is a 747-residue protein sequence, read N- to C-terminus: Major facilitator superfamily domain-containing protein 6-B (747 aa).

11 consecutive transmembrane segments (helical) span residues Leu15–Gln35, Lys75–Val95, Thr222–Val242, Trp271–Ile291, Ile306–His326, Val391–Trp411, Thr420–Ile440, Val453–Tyr470, Gly485–Leu507, Leu520–Ala540, and Gly546–Gly566. 2 stretches are compositionally biased toward polar residues: residues Asn597–Asp606 and Asn652–Ala668. Disordered stretches follow at residues Asn597 to Ala625 and Asn652 to His747. Residues Ser675 to Ser685 are compositionally biased toward low complexity.

It belongs to the major facilitator superfamily. MFSD6 family.

Its subcellular location is the membrane. The protein is Major facilitator superfamily domain-containing protein 6-B (mfsd6b) of Danio rerio (Zebrafish).